A 220-amino-acid polypeptide reads, in one-letter code: Phosphoenolpyruvate guanylyltransferase (220 aa).

The phosphoenolpyruvate site is built by threonine 154, glycine 169, and serine 172.

The protein belongs to the CofC family.

It catalyses the reaction phosphoenolpyruvate + GTP + H(+) = enolpyruvoyl-2-diphospho-5'-guanosine + diphosphate. It functions in the pathway cofactor biosynthesis; coenzyme F420 biosynthesis. In terms of biological role, guanylyltransferase that catalyzes the activation of phosphoenolpyruvate (PEP) as enolpyruvoyl-2-diphospho-5'-guanosine, via the condensation of PEP with GTP. It is involved in the biosynthesis of coenzyme F420, a hydride carrier cofactor. In Mycolicibacterium paratuberculosis (strain ATCC BAA-968 / K-10) (Mycobacterium paratuberculosis), this protein is Phosphoenolpyruvate guanylyltransferase.